A 26-amino-acid polypeptide reads, in one-letter code: Delta-hemolysin (26 aa).

The residue at position 1 (methionine 1) is an N-formylmethionine.

The protein belongs to the delta-lysin family.

It localises to the secreted. The protein resides in the host cell membrane. In terms of biological role, lyses erythrocytes and many other mammalian cells. In Staphylococcus aureus (strain Mu50 / ATCC 700699), this protein is Delta-hemolysin (hld).